The sequence spans 356 residues: Histidinol-phosphate aminotransferase (356 aa).

An N6-(pyridoxal phosphate)lysine modification is found at lysine 214.

The protein belongs to the class-II pyridoxal-phosphate-dependent aminotransferase family. Histidinol-phosphate aminotransferase subfamily. In terms of assembly, homodimer. Pyridoxal 5'-phosphate serves as cofactor.

The catalysed reaction is L-histidinol phosphate + 2-oxoglutarate = 3-(imidazol-4-yl)-2-oxopropyl phosphate + L-glutamate. Its pathway is amino-acid biosynthesis; L-histidine biosynthesis; L-histidine from 5-phospho-alpha-D-ribose 1-diphosphate: step 7/9. The chain is Histidinol-phosphate aminotransferase (hisC) from Escherichia coli O157:H7.